Consider the following 314-residue polypeptide: Malate dehydrogenase (314 aa).

NAD(+) is bound by residues G11–G16 and D35. The substrate site is built by R84 and R90. Residues N97 and I120–N122 contribute to the NAD(+) site. N122 and R153 together coordinate substrate. H177 functions as the Proton acceptor in the catalytic mechanism.

Belongs to the LDH/MDH superfamily. MDH type 3 family.

It carries out the reaction (S)-malate + NAD(+) = oxaloacetate + NADH + H(+). Functionally, catalyzes the reversible oxidation of malate to oxaloacetate. In Rickettsia typhi (strain ATCC VR-144 / Wilmington), this protein is Malate dehydrogenase.